The primary structure comprises 150 residues: Ribosomal RNA large subunit methyltransferase H (150 aa).

Residues Ile-71, Ala-100, and 118–123 each bind S-adenosyl-L-methionine; that span reads LSEMTF.

Belongs to the RNA methyltransferase RlmH family. Homodimer.

It is found in the cytoplasm. The enzyme catalyses pseudouridine(1915) in 23S rRNA + S-adenosyl-L-methionine = N(3)-methylpseudouridine(1915) in 23S rRNA + S-adenosyl-L-homocysteine + H(+). Functionally, specifically methylates the pseudouridine at position 1915 (m3Psi1915) in 23S rRNA. The chain is Ribosomal RNA large subunit methyltransferase H from Helicobacter acinonychis (strain Sheeba).